Consider the following 272-residue polypeptide: Putative phosphoenolpyruvate synthase regulatory protein (272 aa).

Residue 152 to 159 (GVSRCGKT) participates in ADP binding.

The protein belongs to the pyruvate, phosphate/water dikinase regulatory protein family. PSRP subfamily.

It catalyses the reaction [pyruvate, water dikinase] + ADP = [pyruvate, water dikinase]-phosphate + AMP + H(+). It carries out the reaction [pyruvate, water dikinase]-phosphate + phosphate + H(+) = [pyruvate, water dikinase] + diphosphate. Functionally, bifunctional serine/threonine kinase and phosphorylase involved in the regulation of the phosphoenolpyruvate synthase (PEPS) by catalyzing its phosphorylation/dephosphorylation. The sequence is that of Putative phosphoenolpyruvate synthase regulatory protein from Pseudomonas putida (strain ATCC 700007 / DSM 6899 / JCM 31910 / BCRC 17059 / LMG 24140 / F1).